We begin with the raw amino-acid sequence, 91 residues long: Cell division topological specificity factor (91 aa).

This sequence belongs to the MinE family.

Its function is as follows. Prevents the cell division inhibition by proteins MinC and MinD at internal division sites while permitting inhibition at polar sites. This ensures cell division at the proper site by restricting the formation of a division septum at the midpoint of the long axis of the cell. The polypeptide is Cell division topological specificity factor (Gloeobacter violaceus (strain ATCC 29082 / PCC 7421)).